The sequence spans 245 residues: tRNA pseudouridine synthase A (245 aa).

Asp-52 acts as the Nucleophile in catalysis. Position 111 (Tyr-111) interacts with substrate.

It belongs to the tRNA pseudouridine synthase TruA family. In terms of assembly, homodimer.

The enzyme catalyses uridine(38/39/40) in tRNA = pseudouridine(38/39/40) in tRNA. Formation of pseudouridine at positions 38, 39 and 40 in the anticodon stem and loop of transfer RNAs. The chain is tRNA pseudouridine synthase A from Rhodopseudomonas palustris (strain HaA2).